The chain runs to 627 residues: Protein fem-1 homolog B (627 aa).

4 ANK repeats span residues 45-74 (QRSTPLIIAARNGHAKVVRLLLEHYRVQTQ), 87-116 (DGATALWCAAGAGHFEVVKLLVSHGANVNH), 120-149 (TNSTPLRAACFDGRLDIVKYLVENNANISI), and 153-182 (YDNTCLMIAAYKGHTDVVRYLLEQRADPNA). Zn(2+) is bound by residues His185, Cys186, and His218. 2 ANK repeats span residues 186 to 215 (CGATALHFAAEAGHIDIVKELIKWRAAIVV) and 218 to 248 (HGMTPLKVAAESCKADVVELLLSHADCDRRS). A TPR repeat occupies 344-377 (SHPIIYRGAVYADNMEFEQCIKLWLHALHLRQKG). ANK repeat units lie at residues 483-527 (EGFS…EVNA) and 531-568 (EGNSALHIIVQYNRPISDFLTLHSIIISLVEAGAHTDM).

The protein belongs to the fem-1 family. As to quaternary structure, component of a CRL2 E3 ubiquitin-protein ligase complex, also named ECS (Elongin BC-CUL2/5-SOCS-box protein) complex, composed of CUL2, Elongin BC (ELOB and ELOC), RBX1 and substrate-specific adapter FEM1B. Homooligomer. Interacts with PPM1F and PHTF1. Interacts with the death domain of FAS/TNFRSF6 and TNFRSF1A. Interacts with CHEK1. Interacts with NKX3-1. As to expression, expressed in pancreatic islets, within both beta cells and non-beta cells (at protein level). Highly expressed in adult testis; expressed in all types of spermatogonia. Also expressed in the prostate of neonatal mice.

It localises to the cytoplasm. It is found in the nucleus. The protein operates within protein modification; protein ubiquitination. Activity of the CRL2(FEM1B) complex toward FNIP1 is inhibited by BEX family proteins (BEX1, BEX2, BEX3 and/or BEX4) in absence of reductive stress. Mechanistically, BEX proteins act as pseudosubstrate inhibitors that associate with FEM1B via zinc in absence of reductive stress, thereby preventing association between FEM1B and FNIP1. Functionally, substrate-recognition component of a Cul2-RING (CRL2) E3 ubiquitin-protein ligase complex of the DesCEND (destruction via C-end degrons) pathway, which recognizes a C-degron located at the extreme C terminus of target proteins, leading to their ubiquitination and degradation. The C-degron recognized by the DesCEND pathway is usually a motif of less than ten residues and can be present in full-length proteins, truncated proteins or proteolytically cleaved forms. The CRL2(FEM1B) complex specifically recognizes proteins ending with -Gly-Leu-Asp-Arg, such as CDK5R1, leading to their ubiquitination and degradation. Also acts as a regulator of the reductive stress response by mediating ubiquitination of reduced FNIP1: in response to reductive stress, the CRL2(FEM1B) complex specifically recognizes a conserved Cys degron in FNIP1 when this degron is reduced, leading to FNIP1 degradation and subsequent activation of mitochondria to recalibrate reactive oxygen species (ROS). Mechanistically, recognizes and binds reduced FNIP1 through two interface zinc ions, which act as a molecular glue that recruit reduced FNIP1 to FEM1B. Promotes ubiquitination of GLI1, suppressing GLI1 transcriptional activator activity. Promotes ubiquitination and degradation of ANKRD37. Promotes ubiquitination and degradation of SLBP. Involved in apoptosis by acting as a death receptor-associated protein that mediates apoptosis. Also involved in glucose homeostasis in pancreatic islet. May also act as an adapter/mediator in replication stress-induced signaling that leads to the activation of CHEK1. This chain is Protein fem-1 homolog B, found in Mus musculus (Mouse).